We begin with the raw amino-acid sequence, 481 residues long: 3-isopropylmalate dehydratase large subunit (481 aa).

[4Fe-4S] cluster is bound by residues C357, C417, and C420.

It belongs to the aconitase/IPM isomerase family. LeuC type 1 subfamily. In terms of assembly, heterodimer of LeuC and LeuD. [4Fe-4S] cluster serves as cofactor.

It catalyses the reaction (2R,3S)-3-isopropylmalate = (2S)-2-isopropylmalate. The protein operates within amino-acid biosynthesis; L-leucine biosynthesis; L-leucine from 3-methyl-2-oxobutanoate: step 2/4. In terms of biological role, catalyzes the isomerization between 2-isopropylmalate and 3-isopropylmalate, via the formation of 2-isopropylmaleate. The sequence is that of 3-isopropylmalate dehydratase large subunit from Mycolicibacterium gilvum (strain PYR-GCK) (Mycobacterium gilvum (strain PYR-GCK)).